The chain runs to 88 residues: Putative regulatory protein Npun_R3866 (88 aa).

Belongs to the RemA family.

The polypeptide is Putative regulatory protein Npun_R3866 (Nostoc punctiforme (strain ATCC 29133 / PCC 73102)).